Consider the following 351-residue polypeptide: UDP-3-O-acylglucosamine N-acyltransferase (351 aa).

His257 functions as the Proton acceptor in the catalytic mechanism.

It belongs to the transferase hexapeptide repeat family. LpxD subfamily. As to quaternary structure, homotrimer.

It carries out the reaction a UDP-3-O-[(3R)-3-hydroxyacyl]-alpha-D-glucosamine + a (3R)-hydroxyacyl-[ACP] = a UDP-2-N,3-O-bis[(3R)-3-hydroxyacyl]-alpha-D-glucosamine + holo-[ACP] + H(+). It participates in bacterial outer membrane biogenesis; LPS lipid A biosynthesis. Catalyzes the N-acylation of UDP-3-O-acylglucosamine using 3-hydroxyacyl-ACP as the acyl donor. Is involved in the biosynthesis of lipid A, a phosphorylated glycolipid that anchors the lipopolysaccharide to the outer membrane of the cell. This Methylorubrum populi (strain ATCC BAA-705 / NCIMB 13946 / BJ001) (Methylobacterium populi) protein is UDP-3-O-acylglucosamine N-acyltransferase.